The primary structure comprises 282 residues: Bifunctional protein FolD (282 aa).

Residues 164 to 166 (GRS) and Ser189 contribute to the NADP(+) site.

The protein belongs to the tetrahydrofolate dehydrogenase/cyclohydrolase family. As to quaternary structure, homodimer.

The enzyme catalyses (6R)-5,10-methylene-5,6,7,8-tetrahydrofolate + NADP(+) = (6R)-5,10-methenyltetrahydrofolate + NADPH. It catalyses the reaction (6R)-5,10-methenyltetrahydrofolate + H2O = (6R)-10-formyltetrahydrofolate + H(+). It functions in the pathway one-carbon metabolism; tetrahydrofolate interconversion. Catalyzes the oxidation of 5,10-methylenetetrahydrofolate to 5,10-methenyltetrahydrofolate and then the hydrolysis of 5,10-methenyltetrahydrofolate to 10-formyltetrahydrofolate. This is Bifunctional protein FolD from Streptococcus suis (strain 98HAH33).